Here is a 784-residue protein sequence, read N- to C-terminus: ent-copalyl diphosphate synthase 2, chloroplastic (784 aa).

The N-terminal 57 residues, 1–57, are a transit peptide targeting the chloroplast; sequence MSMTLFASVTRPGLPGPTALRFPETRHLFHSVTAFAASFSPSKSSVGSSQCNATTPP. K242 is a substrate binding site. Mg(2+) is bound by residues D379 and D381. Residues 379–382 carry the DXDD motif motif; sequence DIDD. Residue K466 coordinates substrate.

The protein belongs to the terpene synthase family. Mg(2+) is required as a cofactor. As to expression, present in both leaves and flowers.

The protein resides in the plastid. The protein localises to the chloroplast. The protein operates within plant hormone biosynthesis; gibberellin biosynthesis. It participates in secondary metabolite biosynthesis; terpenoid biosynthesis. In terms of biological role, involved in the biosynthesis of labdane-type diterpenoid including marrubiin and other labdane-related furanoid diterpenoids with potential applications as anti-diabetics, analgesics or vasorelaxants. May be involved in the conversion of geranylgeranyl diphosphate (GGPP) to ent-copalyl diphosphate (ent-CPP) and 8-hydroxycopalyl diphosphate (LPP, labda-13-en-8-ol diphosphate). In Marrubium vulgare (White horehound), this protein is ent-copalyl diphosphate synthase 2, chloroplastic.